The following is a 957-amino-acid chain: Glycine dehydrogenase (decarboxylating) (957 aa).

N6-(pyridoxal phosphate)lysine is present on Lys-708.

The protein belongs to the GcvP family. In terms of assembly, the glycine cleavage system is composed of four proteins: P, T, L and H. It depends on pyridoxal 5'-phosphate as a cofactor.

The enzyme catalyses N(6)-[(R)-lipoyl]-L-lysyl-[glycine-cleavage complex H protein] + glycine + H(+) = N(6)-[(R)-S(8)-aminomethyldihydrolipoyl]-L-lysyl-[glycine-cleavage complex H protein] + CO2. The glycine cleavage system catalyzes the degradation of glycine. The P protein binds the alpha-amino group of glycine through its pyridoxal phosphate cofactor; CO(2) is released and the remaining methylamine moiety is then transferred to the lipoamide cofactor of the H protein. This chain is Glycine dehydrogenase (decarboxylating), found in Shigella dysenteriae serotype 1 (strain Sd197).